A 731-amino-acid polypeptide reads, in one-letter code: NADH-ubiquinone oxidoreductase 75 kDa subunit, mitochondrial (731 aa).

The N-terminal 27 residues, 1–27 (MIRAPLVKALGALGSPTHQMASRAVRT), are a transit peptide targeting the mitochondrion. Residues 40–118 (EKIEVFVDDI…GWRIKTNSDL (79 aa)) enclose the 2Fe-2S ferredoxin-type domain. Positions 74, 85, 88, and 102 each coordinate [2Fe-2S] cluster. The region spanning 118 to 157 (LTRKAREGVMEFLLMNHPLDCPICDQGGECDLQDQAMAFG) is the 4Fe-4S His(Cys)3-ligated-type domain. [4Fe-4S] cluster-binding residues include His-134, Cys-138, Cys-141, Cys-147, Cys-190, Cys-193, Cys-196, and Cys-240. Residues 259-315 (IRKVSSIDVLDAVGSNIVVSTRTNEVLRILPRENEDVNEEWLADKSRFACDGLKRQR) enclose the 4Fe-4S Mo/W bis-MGD-type domain.

The protein belongs to the complex I 75 kDa subunit family. In terms of assembly, complex I is composed of about 45 different subunits. It depends on [2Fe-2S] cluster as a cofactor. [4Fe-4S] cluster serves as cofactor.

The protein localises to the mitochondrion inner membrane. It carries out the reaction a ubiquinone + NADH + 5 H(+)(in) = a ubiquinol + NAD(+) + 4 H(+)(out). In terms of biological role, core subunit of the mitochondrial membrane respiratory chain NADH dehydrogenase (Complex I) that is believed to belong to the minimal assembly required for catalysis. Complex I functions in the transfer of electrons from NADH to the respiratory chain. The immediate electron acceptor for the enzyme is believed to be ubiquinone. This is the largest subunit of complex I and it is a component of the iron-sulfur (IP) fragment of the enzyme. It may form part of the active site crevice where NADH is oxidized. This Drosophila melanogaster (Fruit fly) protein is NADH-ubiquinone oxidoreductase 75 kDa subunit, mitochondrial.